A 268-amino-acid polypeptide reads, in one-letter code: Thymidylate synthase (268 aa).

DUMP contacts are provided by residues arginine 26 and 131–132 (RR). Cysteine 151 serves as the catalytic Nucleophile. DUMP is bound by residues 171 to 174 (RSAD), asparagine 182, and 212 to 214 (HIY). Aspartate 174 provides a ligand contact to (6R)-5,10-methylene-5,6,7,8-tetrahydrofolate. (6R)-5,10-methylene-5,6,7,8-tetrahydrofolate is bound at residue serine 267.

Belongs to the thymidylate synthase family. Bacterial-type ThyA subfamily. In terms of assembly, homodimer.

The protein localises to the cytoplasm. The catalysed reaction is dUMP + (6R)-5,10-methylene-5,6,7,8-tetrahydrofolate = 7,8-dihydrofolate + dTMP. The protein operates within pyrimidine metabolism; dTTP biosynthesis. Catalyzes the reductive methylation of 2'-deoxyuridine-5'-monophosphate (dUMP) to 2'-deoxythymidine-5'-monophosphate (dTMP) while utilizing 5,10-methylenetetrahydrofolate (mTHF) as the methyl donor and reductant in the reaction, yielding dihydrofolate (DHF) as a by-product. This enzymatic reaction provides an intracellular de novo source of dTMP, an essential precursor for DNA biosynthesis. In Corynebacterium aurimucosum (strain ATCC 700975 / DSM 44827 / CIP 107346 / CN-1) (Corynebacterium nigricans), this protein is Thymidylate synthase.